Reading from the N-terminus, the 986-residue chain is Rho guanine nucleotide exchange factor 2 (986 aa).

The Phorbol-ester/DAG-type zinc-finger motif lies at 39–86 (GHLFTTISVSGMTMCYACNKSITAKEALICPTCNVTIHNRCKDTLANC). 5 positions are modified to phosphoserine: S109, S122, S129, S133, and S137. Residues 131–161 (RQSLLGSRRGRSSLSLAKSVSTTNIAGHFND) are interaction with DYNLT1. S143 bears the Phosphoserine; by PAK4 mark. 5 positions are modified to phosphoserine: S151, S163, S172, S174, and S177. Residues 235 to 432 (KQQDVIYELI…KELLSNVDEG (198 aa)) form the DH domain. Position 353 is an N6-acetyllysine (K353). Positions 472-571 (KLIHDGCLLW…WIRVIQQSVR (100 aa)) constitute a PH domain. A coiled-coil region spans residues 587 to 611 (EAYLRRIKMELQQKDRALVELLREK). 2 positions are modified to phosphoserine: S645 and S648. The residue at position 679 (T679) is a Phosphothreonine; by MAPK1 or MAPK3. The disordered stretch occupies residues 683 to 705 (PALPLEPDSGGNTSPGVTANGEA). A phosphoserine mark is found at S691, S696, S711, and S782. Residues 798 to 867 (EKQATELALL…RQLAALGQTE (70 aa)) are a coiled coil. The disordered stretch occupies residues 862–986 (ALGQTEPLPA…RDGEAVASES (125 aa)). The residue at position 886 (S886) is a Phosphoserine; by PAK1 and AURKA. A Phosphotyrosine modification is found at Y894. S896 is modified (phosphoserine; by PAK4). The segment covering 920–939 (RNFEDRERQELGSPEERLQD) has biased composition (basic and acidic residues). Phosphoserine occurs at positions 932, 940, and 941. Residues 941–950 (SDPDTGSEEE) are compositionally biased toward acidic residues. T945 is subject to Phosphothreonine. Phosphoserine occurs at positions 947, 952, 953, 956, and 960.

Found in a complex composed at least of ARHGEF2, NOD2 and RIPK2. Interacts with RIPK2; the interaction mediates tyrosine phosphorylation of RIPK2 by Src kinase CSK. Interacts with RIPK1 and RIPK3. Interacts with YWHAZ/14-3-3 zeta; when phosphorylated at Ser-886. Interacts with the kinases PAK4, AURKA and MAPK1. Interacts with RHOA and RAC1. Interacts with NOD1. Interacts (via the N-terminal zinc finger) with CAPN6 (via domain II). Interacts with DYNLT1. In terms of processing, phosphorylation of Ser-886 by PAK1 induces binding to protein YWHAZ, promoting its relocation to microtubules and the inhibition of its activity. Phosphorylated by AURKA and CDK1 during mitosis, which negatively regulates its activity. Phosphorylation by MAPK1 or MAPK3 increases nucleotide exchange activity. Phosphorylation by PAK4 releases GEF-H1 from the microtubules. Phosphorylated on serine, threonine and tyrosine residues in a RIPK2-dependent manner.

It localises to the cytoplasm. The protein localises to the cytoskeleton. Its subcellular location is the cell junction. The protein resides in the tight junction. It is found in the golgi apparatus. It localises to the spindle. The protein localises to the cell projection. Its subcellular location is the ruffle membrane. The protein resides in the cytoplasmic vesicle. In terms of biological role, activates Rho-GTPases by promoting the exchange of GDP for GTP. May be involved in epithelial barrier permeability, cell motility and polarization, dendritic spine morphology, antigen presentation, leukemic cell differentiation, cell cycle regulation, innate immune response, and cancer. Binds Rac-GTPases, but does not seem to promote nucleotide exchange activity toward Rac-GTPases, which was uniquely reported in PubMed:9857026. May stimulate instead the cortical activity of Rac. Inactive toward CDC42, TC10, or Ras-GTPases. Forms an intracellular sensing system along with NOD1 for the detection of microbial effectors during cell invasion by pathogens. Required for RHOA and RIP2 dependent NF-kappaB signaling pathways activation upon S.flexneri cell invasion. Involved not only in sensing peptidoglycan (PGN)-derived muropeptides through NOD1 that is independent of its GEF activity, but also in the activation of NF-kappaB by Shigella effector proteins (IpgB2 and OspB) which requires its GEF activity and the activation of RhoA. Involved in innate immune signaling transduction pathway promoting cytokine IL6/interleukin-6 and TNF-alpha secretion in macrophage upon stimulation by bacterial peptidoglycans; acts as a signaling intermediate between NOD2 receptor and RIPK2 kinase. Contributes to the tyrosine phosphorylation of RIPK2 through Src tyrosine kinase leading to NF-kappaB activation by NOD2. Overexpression activates Rho-, but not Rac-GTPases, and increases paracellular permeability. Involved in neuronal progenitor cell division and differentiation. Involved in the migration of precerebellar neurons. The protein is Rho guanine nucleotide exchange factor 2 (ARHGEF2) of Homo sapiens (Human).